The sequence spans 91 residues: uncharacterized protein (91 aa).

2 consecutive transmembrane segments (helical) span residues 5-27 (FFKY…TNFQ) and 47-69 (DFYH…FIFF).

It localises to the cell membrane. This is an uncharacterized protein from Archaeoglobus fulgidus (strain ATCC 49558 / DSM 4304 / JCM 9628 / NBRC 100126 / VC-16).